Consider the following 1188-residue polypeptide: F-box only protein 38 (1188 aa).

The region spanning methionine 30–aspartate 75 is the F-box domain. An interaction with KLF7 region spans residues lysine 59–arginine 119. 3 short sequence motifs (nuclear export signal) span residues leucine 194 to valine 201, leucine 307 to isoleucine 316, and leucine 451 to leucine 460. Residues alanine 487–arginine 526 are disordered. Positions asparagine 491–histidine 509 are enriched in low complexity. Residue threonine 591 is modified to Phosphothreonine. Residues serine 598, serine 600, and serine 606 each carry the phosphoserine modification. 3 disordered regions span residues arginine 620–glutamate 666, methionine 685–glycine 766, and arginine 787–aspartate 909. Basic and acidic residues-rich tracts occupy residues arginine 621 to glycine 630 and methionine 685 to aspartate 699. Polar residues predominate over residues serine 703 to serine 740. Serine 736 and serine 740 each carry phosphoserine. Residues arginine 787–serine 798 are compositionally biased toward basic and acidic residues. Positions serine 849–glutamate 861 are enriched in polar residues. The span at threonine 889 to threonine 900 shows a compositional bias: basic residues. A Nuclear localization signal motif is present at residues lysine 896–arginine 899.

As to quaternary structure, part of the SCF (SKP1-CUL1-F-box) E3 ubiquitin-protein ligase complex SCF(FBXO38) composed of CUL1, SKP1, RBX1 and FBXO38. Interacts with KLF7. Interacts with PDCD1/PD-1.

It is found in the cytoplasm. The protein localises to the cytosol. It localises to the nucleus. It participates in protein modification; protein ubiquitination. Functionally, substrate recognition component of a SCF (SKP1-CUL1-F-box protein) E3 ubiquitin-protein ligase complex which mediates the ubiquitination and subsequent proteasomal degradation of PDCD1/PD-1, thereby regulating T-cells-mediated immunity. Required for anti-tumor activity of T-cells by promoting the degradation of PDCD1/PD-1; the PDCD1-mediated inhibitory pathway being exploited by tumors to attenuate anti-tumor immunity and facilitate tumor survival. May indirectly stimulate the activity of transcription factor KLF7, a regulator of neuronal differentiation, without promoting KLF7 ubiquitination. The protein is F-box only protein 38 of Homo sapiens (Human).